Here is a 502-residue protein sequence, read N- to C-terminus: ATP synthase subunit alpha (502 aa).

169 to 176 contacts ATP; the sequence is GDRQTGKT.

The protein belongs to the ATPase alpha/beta chains family. F-type ATPases have 2 components, CF(1) - the catalytic core - and CF(0) - the membrane proton channel. CF(1) has five subunits: alpha(3), beta(3), gamma(1), delta(1), epsilon(1). CF(0) has three main subunits: a(1), b(2) and c(9-12). The alpha and beta chains form an alternating ring which encloses part of the gamma chain. CF(1) is attached to CF(0) by a central stalk formed by the gamma and epsilon chains, while a peripheral stalk is formed by the delta and b chains.

Its subcellular location is the cell membrane. It catalyses the reaction ATP + H2O + 4 H(+)(in) = ADP + phosphate + 5 H(+)(out). Its function is as follows. Produces ATP from ADP in the presence of a proton gradient across the membrane. The alpha chain is a regulatory subunit. The polypeptide is ATP synthase subunit alpha (Staphylococcus aureus (strain Mu3 / ATCC 700698)).